The following is a 2453-amino-acid chain: Tyrosine-protein phosphatase non-receptor type 13 (2453 aa).

The KIND domain maps to 3-190 (VSLAEALEVR…SGTDPLSRSS (188 aa)). The interval 183–227 (TDPLSRSSEQKPDRSQAIRDRLRGKGLPTGRSSTSDALDTHEAPL) is disordered. Residues 190 to 205 (SEQKPDRSQAIRDRLR) are compositionally biased toward basic and acidic residues. Position 240 is a phosphoserine (Ser240). The disordered stretch occupies residues 253 to 285 (EDYLKDTPSDNNSRHEDSETFSSPYQFKTSTPQ). Residues 256–270 (LKDTPSDNNSRHEDS) show a composition bias toward basic and acidic residues. Over residues 272-285 (TFSSPYQFKTSTPQ) the composition is skewed to polar residues. Residues Ser297 and Ser298 each carry the phosphoserine modification. The disordered stretch occupies residues 429–457 (SEASKRFESSSGLPGVDETGQTRPSRQYE). Positions 447–457 (TGQTRPSRQYE) are enriched in polar residues. Residues 458-493 (TSLEGNLINQDIMLRRQEEEMMQLQARMALRQSRLS) adopt a coiled-coil conformation. An FERM domain is found at 565-865 (RKVNIRLLSG…SQHKFQLQMR (301 aa)). Residues Ser883, Ser890, Ser901, Ser904, and Ser907 each carry the phosphoserine modification. Positions 944-957 (KEKTDKASWEEKPR) are enriched in basic and acidic residues. Disordered regions lie at residues 944 to 966 (KEKTDKASWEEKPRGMSKSYHDL) and 1007 to 1063 (LAGL…VPFK). Residues Ser1021 and Ser1025 each carry the phosphoserine modification. Positions 1025–1034 (SPERRNHESD) are enriched in basic and acidic residues. A compositionally biased stretch (low complexity) spans 1049–1058 (SLPSSGKSSS). Ser1076 is modified (phosphoserine). One can recognise a PDZ 1 domain in the interval 1084-1170 (LVNLKKDPKH…DVTLVISQPK (87 aa)). Disordered regions lie at residues 1199–1356 (DSAM…GDTF) and 1441–1478 (GQVPTSRERDPAGPQSPPPDQDAQRQAPEKVAKQTPHV). Position 1221 is a phosphoserine (Ser1221). 2 stretches are compositionally biased toward polar residues: residues 1242-1252 (ESASLSQSQVN) and 1267-1279 (PQHSSPSPSVTTK). Ser1270 carries the post-translational modification Phosphoserine. Residues 1297-1315 (GISDLIEHLDCADSDKDDS) are compositionally biased toward basic and acidic residues. The segment covering 1331-1341 (SSSLSTSNKTS) has biased composition (low complexity). The region spanning 1357–1442 (EVELAKTDGS…VVHLLLEKGQ (86 aa)) is the PDZ 2 domain. Over residues 1467-1478 (APEKVAKQTPHV) the composition is skewed to basic and acidic residues. The 89-residue stretch at 1491 to 1579 (EVKLFKNSSG…EVSLLLCRPA (89 aa)) folds into the PDZ 3 domain. Positions 1602–1629 (LNSSKETSQPSSSVEQGASSDDNGVSGK) are enriched in polar residues. Disordered regions lie at residues 1602–1662 (LNSS…AKMP) and 1695–1726 (KLESESSHPPPLDVSPGQTCQPPAECAPSDAT). Positions 1638-1655 (SRRESYSDHSESGEDDSV) are enriched in basic and acidic residues. PDZ domains follow at residues 1764-1845 (LITL…GRIL) and 1857-1942 (LPDI…TRDG). Disordered regions lie at residues 1991-2024 (EAVCPAGEGSSSQMKESAGLTETKESNSRDDDIY) and 2051-2139 (RHAT…DPPF). The span at 2012–2021 (ETKESNSRDD) shows a compositional bias: basic and acidic residues. Positions 2180–2434 (PSKELENLQE…VFCYQVILYV (255 aa)) constitute a Tyrosine-protein phosphatase domain. Substrate-binding positions include Asp2345, 2375–2381 (CSAGIGR), and Gln2419. Cys2375 serves as the catalytic Phosphocysteine intermediate.

It belongs to the protein-tyrosine phosphatase family. Non-receptor class subfamily. As to quaternary structure, interacts (via the first PDZ domain) with PLEKHA1 and PLEKHA2. Interacts (via the second PDZ domain) with TNFRSF6 (Fas receptor) (via C-terminus). Interacts (via the second PDZ domain) with TRIP6 (via the third LIM domain and C-terminus). Interacts (via the third PDZ domain) with NGFR (via C-terminal SVP motif) and PKN2 (via C-terminus). Interacts (via the second or fourth PDZ domains) with PDLIM4 (via C-terminus only or via combined C-terminus and LIM domain, but not LIM domain only). Found in a complex with PDLIM4 and TRIP6. Interacts with PDLIM4; this interaction results in dephosphorylation of SRC 'Tyr-419' by this protein leading to its inactivation. Interacts with BRD7. Interacts with RAPGEF6. Interacts with ARHGAP29. Interacts with PIK3R2; dephosphorylates PIK3R2. Interacts with FBXL2. Interacts (via the FERM domain) with ENTR1. Found in a complex with ENTR1, PTPN13 and GIT1. In terms of tissue distribution, expressed predominantly in kidney and, to a lesser extent, in lung, heart, brain and testis.

Its subcellular location is the cytoplasm. The protein localises to the cytoskeleton. It is found in the nucleus. It localises to the cell projection. The protein resides in the lamellipodium. It catalyses the reaction O-phospho-L-tyrosyl-[protein] + H2O = L-tyrosyl-[protein] + phosphate. In terms of biological role, tyrosine phosphatase which negatively regulates FAS-induced apoptosis and NGFR-mediated pro-apoptotic signaling. May regulate phosphoinositide 3-kinase (PI3K) signaling through dephosphorylation of PIK3R2. This chain is Tyrosine-protein phosphatase non-receptor type 13 (Ptpn13), found in Mus musculus (Mouse).